We begin with the raw amino-acid sequence, 545 residues long: Chaperonin GroEL (545 aa).

Residues 30–33, K51, 87–91, G415, and D495 each bind ATP; these read TLGP and DGTTT.

It belongs to the chaperonin (HSP60) family. Forms a cylinder of 14 subunits composed of two heptameric rings stacked back-to-back. Interacts with the co-chaperonin GroES.

The protein resides in the cytoplasm. The catalysed reaction is ATP + H2O + a folded polypeptide = ADP + phosphate + an unfolded polypeptide.. Together with its co-chaperonin GroES, plays an essential role in assisting protein folding. The GroEL-GroES system forms a nano-cage that allows encapsulation of the non-native substrate proteins and provides a physical environment optimized to promote and accelerate protein folding. This is Chaperonin GroEL from Shewanella sp. (strain ANA-3).